Consider the following 74-residue polypeptide: Protein WFDC9 (74 aa).

The signal sequence occupies residues 1-19 (MKFWILLLTVSAHGIVVFL).

The protein localises to the secreted. The sequence is that of Protein WFDC9 (Wfdc9) from Rattus norvegicus (Rat).